Consider the following 172-residue polypeptide: Large ribosomal subunit protein uL10 (172 aa).

It belongs to the universal ribosomal protein uL10 family. Part of the ribosomal stalk of the 50S ribosomal subunit. The N-terminus interacts with L11 and the large rRNA to form the base of the stalk. The C-terminus forms an elongated spine to which L12 dimers bind in a sequential fashion forming a multimeric L10(L12)X complex.

In terms of biological role, forms part of the ribosomal stalk, playing a central role in the interaction of the ribosome with GTP-bound translation factors. This is Large ribosomal subunit protein uL10 (rplJ) from Liberibacter africanus (Citrus greening disease).